Here is a 209-residue protein sequence, read N- to C-terminus: Kynurenine formamidase (209 aa).

Trp-20 is a substrate binding site. The Zn(2+) site is built by His-50, His-54, and Asp-56. His-60 functions as the Proton donor/acceptor in the catalytic mechanism. 2 residues coordinate Zn(2+): His-161 and Glu-173.

The protein belongs to the Cyclase 1 superfamily. KynB family. Homodimer. Requires Zn(2+) as cofactor.

The catalysed reaction is N-formyl-L-kynurenine + H2O = L-kynurenine + formate + H(+). It participates in amino-acid degradation; L-tryptophan degradation via kynurenine pathway; L-kynurenine from L-tryptophan: step 2/2. Its function is as follows. Catalyzes the hydrolysis of N-formyl-L-kynurenine to L-kynurenine, the second step in the kynurenine pathway of tryptophan degradation. This is Kynurenine formamidase from Bacillus thuringiensis subsp. konkukian (strain 97-27).